We begin with the raw amino-acid sequence, 120 residues long: Large ribosomal subunit protein bL12 (120 aa).

The protein belongs to the bacterial ribosomal protein bL12 family. In terms of assembly, homodimer. Part of the ribosomal stalk of the 50S ribosomal subunit. Forms a multimeric L10(L12)X complex, where L10 forms an elongated spine to which 2 to 4 L12 dimers bind in a sequential fashion. Binds GTP-bound translation factors.

Functionally, forms part of the ribosomal stalk which helps the ribosome interact with GTP-bound translation factors. Is thus essential for accurate translation. The protein is Large ribosomal subunit protein bL12 of Brevibacillus brevis (strain 47 / JCM 6285 / NBRC 100599).